The sequence spans 740 residues: MEDELRCPTCKQLYANPVLLPCFHALCLGCALDIQTPYSPGSALPGAVNGAGAASAAGHNGLHGNGGGAGGGAAAPVTNPNGPGTRHSSHSSAASTASSNTGSESVTSDQDQSDKVSIFSEADSGVVCCSNTSRPVSYAGTGLLPGVGNVVAPPGAAYCLTCPLCRKLVFFDDGGVRNLPTYRAMEAIVDRFCAREALRCQMCETDPKVASLICEQCEIRYCDACRELTHPARGPLAKHTLVKPRGAAQQRESVCGEHEETLSQYCLSCKAPACGLCIGELRHQAHDVQSINVTCKAQKTELSHNLQQLSEKARSTTEFIQRLKGMSDKVTESCMEFERLVHAQCEALIQAIHDRREYLLEAIRMDKDTKIRILKDQQSNCTGKLQQTTGLIQFCIEALKETDSAAFLQVGSMLINRVTNTDMTWHQEVTNAAPRVSPIVDLTLDDAALARAIDNLNFIQMRAVKDGDERCPAAPMTPTILPSDCSAENNSVTVAWQPPNHSFVEGYVLELDDGSGGEFREVYCGKETICTVDGLHFNSMYNARVKAFNSAGEGEYSELIGLQTAEVAWFTFDPVLSGGAGSGLIFSKNNATVSVEGWEHRVALGSVGFSRGVHYWEFTIDNYTADTDPAFGVARIDVARNKMLGKDEKSFAMYIDRQRSWFQHNSIHERRVEGGITTGSTIGVLLDLERHTLSFLVNEMPQGSVAFRDLYGVFYPAVSINRGVTLTMHTAMDAPKMDYF.

The segment at 7-30 adopts an RING-type; degenerate zinc-finger fold; the sequence is CPTCKQLYANPVLLPCFHALCLGC. Gly residues predominate over residues 64-73; sequence GNGGGAGGGA. The disordered stretch occupies residues 64-114; the sequence is GNGGGAGGGAAAPVTNPNGPGTRHSSHSSAASTASSNTGSESVTSDQDQSD. A compositionally biased stretch (low complexity) spans 74-105; that stretch reads AAPVTNPNGPGTRHSSHSSAASTASSNTGSES. Residues 195–244 form a B box-type 1; atypical zinc finger; it reads REALRCQMCETDPKVASLICEQCEIRYCDACRELTHPARGPLAKHTLVKP. Cys200, Cys203, Cys225, His230, Cys255, His258, Cys277, and His283 together coordinate Zn(2+). A B box-type 2 zinc finger spans residues 250–291; the sequence is QRESVCGEHEETLSQYCLSCKAPACGLCIGELRHQAHDVQSI. Residues 294-324 adopt a coiled-coil conformation; the sequence is TCKAQKTELSHNLQQLSEKARSTTEFIQRLK. A COS domain is found at 399 to 459; that stretch reads LKETDSAAFL…ARAIDNLNFI (61 aa). The Fibronectin type-III domain occupies 474–567; the sequence is APMTPTILPS…ELIGLQTAEV (94 aa). A B30.2/SPRY domain is found at 549 to 736; that stretch reads NSAGEGEYSE…TMHTAMDAPK (188 aa).

Belongs to the TRIM/RBCC family. Interacts (via fibronectin type-III domain) with pico. Interacts (via SPRY domain) with netrin receptor fra.

The protein localises to the cell projection. It localises to the axon. The protein resides in the perikaryon. It catalyses the reaction S-ubiquitinyl-[E2 ubiquitin-conjugating enzyme]-L-cysteine + [acceptor protein]-L-lysine = [E2 ubiquitin-conjugating enzyme]-L-cysteine + N(6)-ubiquitinyl-[acceptor protein]-L-lysine.. It functions in the pathway protein modification; protein ubiquitination. E3 ubiquitin-protein ligase activity. During embryonic and larval development, regulates the pattern of axonal projections of class IV nociceptive sensory neurons (C4da) downstream of netrin receptor fra. Regulates fine-scale topography of C4da axon terminals upon neuronal activity. During eye development, consolidates the attachment of R8 photoreceptor growth cones to the target medulla layer, probably downstream of fra. The sequence is that of E3 ubiquitin-protein ligase TRIM9 from Drosophila melanogaster (Fruit fly).